Consider the following 169-residue polypeptide: MELTTPERVLFETEVYEIDDDLKVKRGNVKITESRIMFRSNGNAKLLYISGIQMVEIKKENRWGFFAGGLIFLVSSAIMYLLGLEFGVGSFTSALMLFVLPTAFLFVSLLLLYWWFVTRSYLLDMHTNFGRKLRIRSKSKEDLYEIANAVELVKMGAVRMLQRKERQFV.

Transmembrane regions (helical) follow at residues 62–84 (RWGFFAGGLIFLVSSAIMYLLGL) and 94–116 (ALMLFVLPTAFLFVSLLLLYWWF).

The protein resides in the cell membrane. This is an uncharacterized protein from Archaeoglobus fulgidus (strain ATCC 49558 / DSM 4304 / JCM 9628 / NBRC 100126 / VC-16).